The chain runs to 361 residues: MMDSPKKLGYHMPAEYEPHHGTLMIWPTRPGSWPFQGKDAKRAFTQIIETIAEGERVYLLVEQAYLSEAQSYLGDKVVYLDIPTNDAWARDTGPTILVNDKGKKLAVDWAFNAWGGTYDGLYQDYEEDDQVASRFAEALERPVYDAKPFVLEGGAIHSDGQGTILVTESCLLSPGRNPNLTKEEIENTLLESLGAEKVIWLPYGIYQDETNEHVDNVAAFVGPAEVVLAWTDDENDPQYAMSKADLELLEQETDAKGCHFTIHKLPIPAVRQVVTEEDLPGYIYEEGEEERYAGERLAASYVNFYIANKAVLVPQFEDVNDQVALDILSKCFPDRKVVGIPARDILLGGGNIHCITQQIPE.

The Amidino-cysteine intermediate role is filled by Cys354.

The protein belongs to the agmatine deiminase family.

The catalysed reaction is agmatine + H2O = N-carbamoylputrescine + NH4(+). The protein is Putative agmatine deiminase of Streptococcus pneumoniae (strain Hungary19A-6).